A 239-amino-acid polypeptide reads, in one-letter code: Endolytic peptidoglycan transglycosylase RlpA (239 aa).

An N-terminal signal peptide occupies residues 1–25; the sequence is MTLTRKTLFLLTAAFGTHSLQTASA. One can recognise an SPOR domain in the interval 160 to 239; it reads VAENKDIFID…GMVRAVLTAG (80 aa).

It belongs to the RlpA family.

Lytic transglycosylase with a strong preference for naked glycan strands that lack stem peptides. This chain is Endolytic peptidoglycan transglycosylase RlpA, found in Neisseria meningitidis serogroup B (strain ATCC BAA-335 / MC58).